We begin with the raw amino-acid sequence, 383 residues long: Probable mannan endo-1,4-beta-mannosidase A (383 aa).

Positions 1–21 are cleaved as a signal peptide; sequence MKLSNALLTLASLALANVSTA. N-linked (GlcNAc...) asparagine glycosylation occurs at asparagine 17. Tryptophan 92 lines the substrate pocket. Asparagine 194 carries N-linked (GlcNAc...) asparagine glycosylation. Asparagine 205 provides a ligand contact to substrate. Glutamate 206 functions as the Proton donor in the catalytic mechanism. Residue asparagine 263 is glycosylated (N-linked (GlcNAc...) asparagine). Tyrosine 281 lines the substrate pocket. Glutamate 314 (nucleophile) is an active-site residue. Substrate is bound at residue tryptophan 344.

The protein belongs to the glycosyl hydrolase 5 (cellulase A) family.

It localises to the secreted. The catalysed reaction is Random hydrolysis of (1-&gt;4)-beta-D-mannosidic linkages in mannans, galactomannans and glucomannans.. In terms of biological role, endo-1,4-mannanase, a crucial enzyme for depolymerization of seed galactomannans and wood galactoglucomannans. This Aspergillus niger (strain ATCC MYA-4892 / CBS 513.88 / FGSC A1513) protein is Probable mannan endo-1,4-beta-mannosidase A (manA).